A 272-amino-acid polypeptide reads, in one-letter code: Ribosomal RNA small subunit methyltransferase A (272 aa).

Positions 18, 20, 45, 66, 91, and 113 each coordinate S-adenosyl-L-methionine.

This sequence belongs to the class I-like SAM-binding methyltransferase superfamily. rRNA adenine N(6)-methyltransferase family. RsmA subfamily.

Its subcellular location is the cytoplasm. The enzyme catalyses adenosine(1518)/adenosine(1519) in 16S rRNA + 4 S-adenosyl-L-methionine = N(6)-dimethyladenosine(1518)/N(6)-dimethyladenosine(1519) in 16S rRNA + 4 S-adenosyl-L-homocysteine + 4 H(+). Its function is as follows. Specifically dimethylates two adjacent adenosines (A1518 and A1519) in the loop of a conserved hairpin near the 3'-end of 16S rRNA in the 30S particle. May play a critical role in biogenesis of 30S subunits. The chain is Ribosomal RNA small subunit methyltransferase A from Yersinia enterocolitica serotype O:8 / biotype 1B (strain NCTC 13174 / 8081).